Consider the following 60-residue polypeptide: Translational regulator CsrA (60 aa).

This sequence belongs to the CsrA/RsmA family. In terms of assembly, homodimer; the beta-strands of each monomer intercalate to form a hydrophobic core, while the alpha-helices form wings that extend away from the core.

The protein localises to the cytoplasm. In terms of biological role, a key translational regulator that binds mRNA to regulate translation initiation and/or mRNA stability. Mediates global changes in gene expression, shifting from rapid growth to stress survival by linking envelope stress, the stringent response and the catabolite repression systems. Usually binds in the 5'-UTR; binding at or near the Shine-Dalgarno sequence prevents ribosome-binding, repressing translation, binding elsewhere in the 5'-UTR can activate translation and/or stabilize the mRNA. Its function is antagonized by small RNA(s). The chain is Translational regulator CsrA from Histophilus somni (strain 2336) (Haemophilus somnus).